Consider the following 1044-residue polypeptide: Elongation factor 3 (1044 aa).

The stretch at 5-42 (AQSIKVLGELFEKLSVATAENREATATEIASFLNGNII) is one HEAT 1 repeat. Residues I42 and H44 each contribute to the ADP site. One copy of the HEAT 2 repeat lies at 45–80 (DVPEEFFKNLTKAVKDKKTAAAALETIAHIANENNL). S83 contacts ADP. HEAT repeat units follow at residues 86–123 (PYIVDLVPEVCVKTGDKDKDVQSIASETLLAIVKAIDP), 124–162 (VAIKVILPHLTKSLVTTNKWQEKVSVLAAISALVDAAKT), 166–203 (LRMPELIPVLSEAMWDTKKEVKHAATATMTKATETVDN), 205–241 (DIERFIPELIQCIADPSQVSETVHLLGATTFVAEVTP), 242–279 (ATLSIMVPLLNRGLAERETSIKRKAAVIIDNMCKLVED), and 285–323 (PFLEKLLPGLKNNFATIADPEAREVTLRGLKTLRRVGNV). ADP-binding residues include T392, H396, and E397. 2 consecutive ABC transporter domains span residues 426 to 641 (DEGE…YYEL) and 667 to 993 (VKVS…KKED). Residues N703, E922, N925, and H951 each contribute to the ADP site. The tract at residues 975 to 1044 (GHNWVSGQGS…DAYVSSDDEF (70 aa)) is disordered. Residues 987 to 999 (RLEKKEDEGDKFD) are compositionally biased toward basic and acidic residues. A compositionally biased stretch (basic residues) spans 1009-1031 (NKKKKLSSAELRKKKKERMKKKK).

This sequence belongs to the ABC transporter superfamily. ABCF family. EF3 subfamily. In terms of assembly, monomer.

It localises to the cytoplasm. The enzyme catalyses ATP + H2O = ADP + phosphate + H(+). It functions in the pathway protein biosynthesis; polypeptide chain elongation. In terms of biological role, ribosome-dependent ATPase that functions in cytoplasmic translation elongation. Required for the ATP-dependent release of deacylated tRNA from the ribosomal E-site during protein biosynthesis. Stimulates the eEF1A-dependent binding of aminoacyl-tRNA to the ribosomal A-site, which has reduced affinity for tRNA as long as the E-site is occupied. Assists translation termination by stimulating the release of nascent protein from the ribosome by release factors. This is Elongation factor 3 (TEF3) from Eremothecium gossypii (strain ATCC 10895 / CBS 109.51 / FGSC 9923 / NRRL Y-1056) (Yeast).